Reading from the N-terminus, the 535-residue chain is Probable C4-dicarboxylate sensor kinase (535 aa).

The Cytoplasmic segment spans residues 1–11 (MNKKKLSIRWK). A helical transmembrane segment spans residues 12–32 (ITILSYILVIFSFLIGGIVLI). Residues 33–172 (GNIQHTEERE…IADILLHLKR (140 aa)) are Extracellular-facing. A helical transmembrane segment spans residues 173–193 (DIAFIVVLTLGFGLAGSFLLA). The Cytoplasmic segment spans residues 194–535 (RHIKKQMFQL…MKGEEAQHGS (342 aa)). The PAS domain maps to 213–276 (EERTATFHSM…PEIVERNKAV (64 aa)). In terms of domain architecture, Histidine kinase spans 333 to 528 (VQNHEHMNKL…SFSIVFPMKG (196 aa)). At His-336 the chain carries Phosphohistidine; by autocatalysis.

It localises to the cell membrane. It carries out the reaction ATP + protein L-histidine = ADP + protein N-phospho-L-histidine.. In terms of biological role, member of the two-component regulatory system DctS/DctR. Probably activates DctR by phosphorylation. Essential for expression of dctP. In Bacillus subtilis (strain 168), this protein is Probable C4-dicarboxylate sensor kinase (dctS).